Reading from the N-terminus, the 172-residue chain is Small ribosomal subunit protein uS5 (172 aa).

The S5 DRBM domain maps to 17–80 (LREKMIAVNR…DEARRKMVKV (64 aa)).

This sequence belongs to the universal ribosomal protein uS5 family. As to quaternary structure, part of the 30S ribosomal subunit. Contacts proteins S4 and S8.

In terms of biological role, with S4 and S12 plays an important role in translational accuracy. Located at the back of the 30S subunit body where it stabilizes the conformation of the head with respect to the body. In Ralstonia nicotianae (strain ATCC BAA-1114 / GMI1000) (Ralstonia solanacearum), this protein is Small ribosomal subunit protein uS5.